The sequence spans 565 residues: NAD-dependent malic enzyme (565 aa).

Tyrosine 104 serves as the catalytic Proton donor. An NAD(+)-binding site is contributed by arginine 157. Lysine 175 serves as the catalytic Proton acceptor. A divalent metal cation is bound by residues glutamate 246, aspartate 247, and aspartate 270. The NAD(+) site is built by aspartate 270 and asparagine 418.

This sequence belongs to the malic enzymes family. In terms of assembly, homotetramer. The cofactor is Mg(2+). Mn(2+) is required as a cofactor.

It carries out the reaction (S)-malate + NAD(+) = pyruvate + CO2 + NADH. The catalysed reaction is oxaloacetate + H(+) = pyruvate + CO2. In Shigella sonnei (strain Ss046), this protein is NAD-dependent malic enzyme.